The primary structure comprises 607 residues: Guanine nucleotide-binding protein-like 1 (607 aa).

The span at 1 to 14 (MPRKKPFSVKQKKK) shows a compositional bias: basic residues. Residues 1–81 (MPRKKPFSVK…GPRGYDPNRY (81 aa)) are disordered. Positions 15–26 (QLQDKRERKRGL) are enriched in basic and acidic residues. A phosphoserine mark is found at Ser-32, Ser-33, and Ser-34. 2 positions are modified to phosphothreonine: Thr-48 and Thr-50. Phosphoserine occurs at positions 51 and 68. In terms of domain architecture, CP-type G spans 178 to 418 (WRQLWRVLEM…LCDCPGLIFP (241 aa)). 225–228 (NKVD) contributes to the GTP binding site. Ser-324 bears the Phosphoserine mark. Residues 367 to 374 (GFPNVGKS) and 411 to 415 (DCPGL) contribute to the GTP site. The interval 547-607 (GPAGDEEEEE…PYALLGEDEC (61 aa)) is disordered. The segment covering 550–584 (GDEEEEEEEELSSSCEEEGEEDRDADEEGEGDEET) has biased composition (acidic residues). 3 positions are modified to phosphoserine: Ser-561, Ser-562, and Ser-563.

Belongs to the TRAFAC class YlqF/YawG GTPase family.

In terms of biological role, possible regulatory or functional link with the histocompatibility cluster. The chain is Guanine nucleotide-binding protein-like 1 (GNL1) from Pan troglodytes (Chimpanzee).